The chain runs to 263 residues: 3-methyl-2-oxobutanoate hydroxymethyltransferase (263 aa).

Residues aspartate 45 and aspartate 84 each coordinate Mg(2+). 3-methyl-2-oxobutanoate-binding positions include 45–46, aspartate 84, and lysine 112; that span reads DS. Glutamate 114 is a binding site for Mg(2+). The Proton acceptor role is filled by glutamate 180.

Belongs to the PanB family. In terms of assembly, homodecamer; pentamer of dimers. Mg(2+) is required as a cofactor.

Its subcellular location is the cytoplasm. It catalyses the reaction 3-methyl-2-oxobutanoate + (6R)-5,10-methylene-5,6,7,8-tetrahydrofolate + H2O = 2-dehydropantoate + (6S)-5,6,7,8-tetrahydrofolate. Its pathway is cofactor biosynthesis; (R)-pantothenate biosynthesis; (R)-pantoate from 3-methyl-2-oxobutanoate: step 1/2. Functionally, catalyzes the reversible reaction in which hydroxymethyl group from 5,10-methylenetetrahydrofolate is transferred onto alpha-ketoisovalerate to form ketopantoate. The sequence is that of 3-methyl-2-oxobutanoate hydroxymethyltransferase from Klebsiella pneumoniae (strain 342).